A 347-amino-acid polypeptide reads, in one-letter code: Holliday junction branch migration complex subunit RuvB (347 aa).

Residues 1-186 (MKDENSINFL…FGITARFELY (186 aa)) are large ATPase domain (RuvB-L). Residues L25, R26, G67, K70, T71, T72, 133 to 135 (EDY), R176, Y186, and R223 each bind ATP. Position 71 (T71) interacts with Mg(2+). The small ATPAse domain (RuvB-S) stretch occupies residues 187–257 (SEIELVEIIK…IVAIGLEMLR (71 aa)). A head domain (RuvB-H) region spans residues 260 to 347 (GEGLDEQDRN…NLNENQRVSF (88 aa)). The DNA site is built by R315 and R320.

Belongs to the RuvB family. In terms of assembly, homohexamer. Forms an RuvA(8)-RuvB(12)-Holliday junction (HJ) complex. HJ DNA is sandwiched between 2 RuvA tetramers; dsDNA enters through RuvA and exits via RuvB. An RuvB hexamer assembles on each DNA strand where it exits the tetramer. Each RuvB hexamer is contacted by two RuvA subunits (via domain III) on 2 adjacent RuvB subunits; this complex drives branch migration. In the full resolvosome a probable DNA-RuvA(4)-RuvB(12)-RuvC(2) complex forms which resolves the HJ.

The protein resides in the cytoplasm. It carries out the reaction ATP + H2O = ADP + phosphate + H(+). Functionally, the RuvA-RuvB-RuvC complex processes Holliday junction (HJ) DNA during genetic recombination and DNA repair, while the RuvA-RuvB complex plays an important role in the rescue of blocked DNA replication forks via replication fork reversal (RFR). RuvA specifically binds to HJ cruciform DNA, conferring on it an open structure. The RuvB hexamer acts as an ATP-dependent pump, pulling dsDNA into and through the RuvAB complex. RuvB forms 2 homohexamers on either side of HJ DNA bound by 1 or 2 RuvA tetramers; 4 subunits per hexamer contact DNA at a time. Coordinated motions by a converter formed by DNA-disengaged RuvB subunits stimulates ATP hydrolysis and nucleotide exchange. Immobilization of the converter enables RuvB to convert the ATP-contained energy into a lever motion, pulling 2 nucleotides of DNA out of the RuvA tetramer per ATP hydrolyzed, thus driving DNA branch migration. The RuvB motors rotate together with the DNA substrate, which together with the progressing nucleotide cycle form the mechanistic basis for DNA recombination by continuous HJ branch migration. Branch migration allows RuvC to scan DNA until it finds its consensus sequence, where it cleaves and resolves cruciform DNA. The sequence is that of Holliday junction branch migration complex subunit RuvB from Borreliella afzelii (strain PKo) (Borrelia afzelii).